Consider the following 575-residue polypeptide: Manganese transporter SMF1 (575 aa).

Residues 1 to 70 (MVNVGPSHAA…TYVSKRQVMR (70 aa)) are Extracellular-facing. Position 24 is a phosphoserine (Ser24). Residues Lys33 and Lys34 each participate in a glycyl lysine isopeptide (Lys-Gly) (interchain with G-Cter in ubiquitin) cross-link. The helical transmembrane segment at 71–91 (DIFAKYLKFIGPGLMVSVAYI) threads the bilayer. Over 92–108 (DPGNYSTAVDAGASNQF) the chain is Cytoplasmic. Residues 109-129 (SLLCIILLSNFIAIFLQCLCI) traverse the membrane as a helical segment. The Extracellular portion of the chain corresponds to 130 to 156 (KLGSVTGLDLSRACREYLPRWLNWTLY). The helical transmembrane segment at 157 to 177 (FFAECAVIATDIAEVIGTAIA) threads the bilayer. The Cytoplasmic portion of the chain corresponds to 178–179 (LN). A helical transmembrane segment spans residues 180 to 200 (ILIKVPLPAGVAITVVDVFLI). The Extracellular segment spans residues 201 to 218 (MFTYKPGASSIRFIRIFE). The chain crosses the membrane as a helical span at residues 219–239 (CFVAVLVVGVCICFAIELAYI). Topologically, residues 240-266 (PKSTSVKQVFRGFVPSAQMFDHNGIYT) are cytoplasmic. The chain crosses the membrane as a helical span at residues 267–287 (AISILGATVMPHSLFLGSALV). Residues 288 to 344 (QPRLLDYDVKHGNYTVSEEQDKVKKSKSTEEIMEEKYFNYRPTNAAIKYCMKYSMVE) lie on the Extracellular side of the membrane. A helical membrane pass occupies residues 345–365 (LSITLFTLALFVNCAILVVAG). The Cytoplasmic portion of the chain corresponds to 366–396 (STLYNSPEADGADLFTIHELLSRNLAPAAGT). Residues 397–417 (IFMLALLLSGQSAGVVCTMSG) traverse the membrane as a helical segment. Residues 418–463 (QIVSEGHINWKLQPWQRRLATRCISIIPCLVISICIGREALSKALN) lie on the Extracellular side of the membrane. The chain crosses the membrane as a helical span at residues 464–484 (ASQVVLSIVLPFLVAPLIFFT). At 485 to 543 (CKKSIMKTEITVDHTEEDSHNHQNNNDRSAGSVIEQDGSSGMEIENGKDVKIVYMANNW) the chain is on the cytoplasmic side. The tract at residues 498–517 (HTEEDSHNHQNNNDRSAGSV) is disordered. Residues 544 to 564 (IITVIAIIVWLFLSLLNVYAI) form a helical membrane-spanning segment. The Extracellular portion of the chain corresponds to 565 to 575 (VQLGMSHGDIS).

The protein belongs to the NRAMP family.

It is found in the cell membrane. The catalysed reaction is Mn(2+)(in) = Mn(2+)(out). Its function is as follows. High-affinity manganese transporter involved in manganese uptake from the extracellular environment. Also contributes to cellular accumulation of other divalent metal ions such as cadmium, cobalt, copper, iron and nickel. In Saccharomyces cerevisiae (strain ATCC 204508 / S288c) (Baker's yeast), this protein is Manganese transporter SMF1 (SMF1).